The chain runs to 229 residues: Uracil-DNA glycosylase (229 aa).

Asp67 (proton acceptor) is an active-site residue.

Belongs to the uracil-DNA glycosylase (UDG) superfamily. UNG family.

Its subcellular location is the cytoplasm. The enzyme catalyses Hydrolyzes single-stranded DNA or mismatched double-stranded DNA and polynucleotides, releasing free uracil.. In terms of biological role, excises uracil residues from the DNA which can arise as a result of misincorporation of dUMP residues by DNA polymerase or due to deamination of cytosine. The polypeptide is Uracil-DNA glycosylase (Coxiella burnetii (strain RSA 493 / Nine Mile phase I)).